The sequence spans 91 residues: Probable translocation protein y4yM (91 aa).

A run of 2 helical transmembrane segments spans residues Val15–Ile35 and Leu55–Glu75.

The protein belongs to the FliQ/MopD/SpaQ family.

The protein localises to the cell membrane. Its function is as follows. Could be involved in the secretion of an unknown factor. The polypeptide is Probable translocation protein y4yM (Sinorhizobium fredii (strain NBRC 101917 / NGR234)).